Here is a 116-residue protein sequence, read N- to C-terminus: Large ribosomal subunit protein bL19 (116 aa).

The protein belongs to the bacterial ribosomal protein bL19 family.

In terms of biological role, this protein is located at the 30S-50S ribosomal subunit interface and may play a role in the structure and function of the aminoacyl-tRNA binding site. The protein is Large ribosomal subunit protein bL19 of Azotobacter vinelandii (strain DJ / ATCC BAA-1303).